Here is a 106-residue protein sequence, read N- to C-terminus: Cytochrome c2 (106 aa).

4 residues coordinate heme c: Cys-19, Cys-22, His-23, and Met-84.

The protein belongs to the cytochrome c family. Post-translationally, binds 1 heme c group covalently per subunit.

The protein is Cytochrome c2 of Rhodopila globiformis (Rhodopseudomonas globiformis).